Consider the following 309-residue polypeptide: MSFNLQSSKKLFIFLGKSLFSLLEAMIFALLPKPRKNVAGEIVLITGAGSGLGRLLALQFARLGSVLVLWDINKEGNEETCKMAREAGATRVHAYTCDCSQKEGVYRVADQVKKEVGDVSILINNAGIVTGKKFLDCPDELMEKSFDVNFKAHLWTYKAFLPAMIANDHGHLVCISSSAGLSGVNGLADYCASKFAAFGFAESVFVETFVQKQKGIKTTIVCPFFIKTGMFEGCTTGCPSLLPILEPKYAVEKIVEAILQEKMYLYMPKLLYFMMFLKSFLPLKTGLLIADYLGILHAMDGFVDQKKKL.

A helical membrane pass occupies residues 11–31 (LFIFLGKSLFSLLEAMIFALL). 44–68 (LITGAGSGLGRLLALQFARLGSVLV) provides a ligand contact to NADP(+). Residue Ser177 participates in substrate binding. Catalysis depends on Tyr190, which acts as the Proton acceptor. A helical transmembrane segment spans residues 270–290 (LLYFMMFLKSFLPLKTGLLIA).

This sequence belongs to the short-chain dehydrogenases/reductases (SDR) family. In terms of tissue distribution, detected in adult lung. Detected at low levels in adult brain, heart, testis, placenta, cervix, pancreas, uterus, stomach, rectum, small intestine, colon, esophagus, thymus, skin, and skin keratinocyte. Expression is higher in psoriasis lesions relative to unaffected skin from psoriasis patients. Detected in fetal kidney, skin and lung.

It is found in the endoplasmic reticulum membrane. The enzyme catalyses all-trans-retinol--[retinol-binding protein] + NAD(+) = all-trans-retinal--[retinol-binding protein] + NADH + H(+). It functions in the pathway cofactor metabolism; retinol metabolism. In terms of biological role, oxidoreductase with strong preference for NAD. Active in both the oxidative and reductive directions. Oxidizes all-trans-retinol in all-trans-retinaldehyde. No activity was detected with 11-cis-retinol or 11-cis-retinaldehyde as substrates with either NAD(+)/NADH or NADP(+)/NADPH. The chain is Epidermal retinol dehydrogenase 2 from Homo sapiens (Human).